An 87-amino-acid polypeptide reads, in one-letter code: Translation initiation factor IF-1 2 (87 aa).

Residues 1-72 enclose the S1-like domain; sequence MAKEELLEMQ…SKGRITFRHI (72 aa).

Belongs to the IF-1 family. As to quaternary structure, component of the 30S ribosomal translation pre-initiation complex which assembles on the 30S ribosome in the order IF-2 and IF-3, IF-1 and N-formylmethionyl-tRNA(fMet); mRNA recruitment can occur at any time during PIC assembly.

Its subcellular location is the cytoplasm. In terms of biological role, one of the essential components for the initiation of protein synthesis. Stabilizes the binding of IF-2 and IF-3 on the 30S subunit to which N-formylmethionyl-tRNA(fMet) subsequently binds. Helps modulate mRNA selection, yielding the 30S pre-initiation complex (PIC). Upon addition of the 50S ribosomal subunit IF-1, IF-2 and IF-3 are released leaving the mature 70S translation initiation complex. This is Translation initiation factor IF-1 2 from Dechloromonas aromatica (strain RCB).